Here is a 427-residue protein sequence, read N- to C-terminus: UDP-N-acetylglucosamine 1-carboxyvinyltransferase (427 aa).

22 to 23 (KN) serves as a coordination point for phosphoenolpyruvate. Arginine 92 is a UDP-N-acetyl-alpha-D-glucosamine binding site. Aspartate 116 (proton donor) is an active-site residue. UDP-N-acetyl-alpha-D-glucosamine contacts are provided by aspartate 312 and methionine 334.

This sequence belongs to the EPSP synthase family. MurA subfamily.

The protein localises to the cytoplasm. The enzyme catalyses phosphoenolpyruvate + UDP-N-acetyl-alpha-D-glucosamine = UDP-N-acetyl-3-O-(1-carboxyvinyl)-alpha-D-glucosamine + phosphate. It participates in cell wall biogenesis; peptidoglycan biosynthesis. Cell wall formation. Adds enolpyruvyl to UDP-N-acetylglucosamine. This is UDP-N-acetylglucosamine 1-carboxyvinyltransferase from Borreliella burgdorferi (strain ATCC 35210 / DSM 4680 / CIP 102532 / B31) (Borrelia burgdorferi).